The sequence spans 447 residues: NADH-ubiquinone oxidoreductase chain 4 (447 aa).

13 helical membrane passes run 28 to 48 (IFLLTFMFMINLSSLNYFNYI), 56 to 76 (MVSYGLILLSFWICGLMLMAS), 89 to 109 (FVFMILFLLFMLVLTFSSMSV), 110 to 130 (FMFYLFFEASLIPTLFLILGW), 141 to 161 (VYLLFYTLLASLPLLIGIFYI), 183 to 203 (LLYLSLVFAFLVKMPMFLVHL), 213 to 233 (PVSGSMILAGILLKLGGYGLL), 246 to 266 (YNYWWISISLVGGVLISLVCL), 273 to 293 (ALIAYSSVAHMGIVLSGLLTM), 298 to 318 (LTGSYALMIAHGLCSSGLFCL), 331 to 351 (LLINKGLLNFMPTLSLWWFLL), 374 to 394 (IVSWSWITMIMLSFLSFFSAA), and 409 to 431 (YSGVYFFSVGTTREFLLLMLHWL).

This sequence belongs to the complex I subunit 4 family.

The protein resides in the mitochondrion membrane. The catalysed reaction is a ubiquinone + NADH + 5 H(+)(in) = a ubiquinol + NAD(+) + 4 H(+)(out). In terms of biological role, core subunit of the mitochondrial membrane respiratory chain NADH dehydrogenase (Complex I) that is believed to belong to the minimal assembly required for catalysis. Complex I functions in the transfer of electrons from NADH to the respiratory chain. The immediate electron acceptor for the enzyme is believed to be ubiquinone. The protein is NADH-ubiquinone oxidoreductase chain 4 (mt:ND4) of Anopheles gambiae (African malaria mosquito).